Reading from the N-terminus, the 270-residue chain is Very long chain fatty acid elongase 3 (270 aa).

The N-linked (GlcNAc...) asparagine glycan is linked to Asn6. 2 helical membrane passes run 29 to 49 and 63 to 83; these read FFEE…VLIA and LQGP…LGAV. Asn110 is a glycosylation site (N-linked (GlcNAc...) asparagine). Transmembrane regions (helical) follow at residues 115-135, 140-160, 164-184, 198-218, and 235-255; these read FWSW…AFII, PLIF…SFGY, VPAG…MYTY, LPML…IVSI, and HLFW…HFFC. A Di-lysine motif motif is present at residues 266–270; it reads KTKSQ.

This sequence belongs to the ELO family. ELOVL3 subfamily. Interacts with TECR. In terms of processing, N-Glycosylated. Testis.

The protein resides in the endoplasmic reticulum membrane. The catalysed reaction is a very-long-chain acyl-CoA + malonyl-CoA + H(+) = a very-long-chain 3-oxoacyl-CoA + CO2 + CoA. It catalyses the reaction eicosanoyl-CoA + malonyl-CoA + H(+) = 3-oxodocosanoyl-CoA + CO2 + CoA. It carries out the reaction hexadecanoyl-CoA + malonyl-CoA + H(+) = 3-oxooctadecanoyl-CoA + CO2 + CoA. The enzyme catalyses octadecanoyl-CoA + malonyl-CoA + H(+) = 3-oxoeicosanoyl-CoA + CO2 + CoA. The catalysed reaction is (9Z)-octadecenoyl-CoA + malonyl-CoA + H(+) = 3-oxo-(11Z)-eicosenoyl-CoA + CO2 + CoA. It catalyses the reaction (9Z,12Z)-octadecadienoyl-CoA + malonyl-CoA + H(+) = (11Z,14Z)-3-oxoicosa-11,14-dienoyl-CoA + CO2 + CoA. It carries out the reaction (9Z,12Z,15Z)-octadecatrienoyl-CoA + malonyl-CoA + H(+) = (11Z,14Z,17Z)-3-oxoeicosatrienoyl-CoA + CO2 + CoA. The enzyme catalyses docosanoyl-CoA + malonyl-CoA + H(+) = 3-oxotetracosanoyl-CoA + CO2 + CoA. The catalysed reaction is tetradecanoyl-CoA + malonyl-CoA + H(+) = 3-oxohexadecanoyl-CoA + CO2 + CoA. The protein operates within lipid metabolism; polyunsaturated fatty acid biosynthesis. In terms of biological role, catalyzes the first and rate-limiting reaction of the four reactions that constitute the long-chain fatty acids elongation cycle. This endoplasmic reticulum-bound enzymatic process allows the addition of 2 carbons to the chain of long- and very long-chain fatty acids (VLCFAs) per cycle. Condensing enzyme that exhibits activity toward saturated and unsaturated acyl-CoA substrates with higher activity toward C18 acyl-CoAs, especially C18:0 acyl-CoAs. May participate in the production of saturated and monounsaturated VLCFAs of different chain lengths that are involved in multiple biological processes as precursors of membrane lipids and lipid mediators. The protein is Very long chain fatty acid elongase 3 of Homo sapiens (Human).